We begin with the raw amino-acid sequence, 170 residues long: MKVILRADVENLGKLGDIVEVRPGYGRNFLLPQGMAMAATASNMKVFEMERRKLQAEMDAVRATATTLAEKIAAADVSIAVRVGENDKLYGSVTPAHIADALAEAGVEIDRRRILLDAPIRNLGEYDVRVRLHADVEAVIALKVVAEGRTEEADAEESAAEEPAVEEAAE.

A disordered region spans residues 149–170 (RTEEADAEESAAEEPAVEEAAE). Over residues 153 to 170 (ADAEESAAEEPAVEEAAE) the composition is skewed to acidic residues.

It belongs to the bacterial ribosomal protein bL9 family.

Its function is as follows. Binds to the 23S rRNA. The protein is Large ribosomal subunit protein bL9 of Oleidesulfovibrio alaskensis (strain ATCC BAA-1058 / DSM 17464 / G20) (Desulfovibrio alaskensis).